A 226-amino-acid polypeptide reads, in one-letter code: tRNA (guanine-N(7)-)-methyltransferase (226 aa).

Glu-59, Glu-84, Asp-111, and Asp-134 together coordinate S-adenosyl-L-methionine. Asp-134 is an active-site residue. Residue Lys-138 participates in substrate binding. Residues 140–145 (RHNKRR) are interaction with RNA. Substrate-binding positions include Asp-170 and 205-208 (TKFE).

It belongs to the class I-like SAM-binding methyltransferase superfamily. TrmB family.

The enzyme catalyses guanosine(46) in tRNA + S-adenosyl-L-methionine = N(7)-methylguanosine(46) in tRNA + S-adenosyl-L-homocysteine. It participates in tRNA modification; N(7)-methylguanine-tRNA biosynthesis. Functionally, catalyzes the formation of N(7)-methylguanine at position 46 (m7G46) in tRNA. The sequence is that of tRNA (guanine-N(7)-)-methyltransferase from Chromobacterium violaceum (strain ATCC 12472 / DSM 30191 / JCM 1249 / CCUG 213 / NBRC 12614 / NCIMB 9131 / NCTC 9757 / MK).